The chain runs to 828 residues: E3 ubiquitin-protein ligase bre-1 (828 aa).

The segment at 1-25 (MMKRNNEGIGGEGVANSPPDDTQQK) is disordered. An interaction with ubc-1 region spans residues 1 to 309 (MMKRNNEGIG…SREIEALRAD (309 aa)). 2 coiled-coil regions span residues 53–92 (QAAKLRQTVLIKNKRISDLERENERAKRRQLTDESNFLKV) and 185–251 (HKEL…TEKQ). Residues 269 to 298 (ASGNATASSSATLNQSEKKMGSPGSPPSES) are compositionally biased toward low complexity. The interval 269-304 (ASGNATASSSATLNQSEKKMGSPGSPPSESTSREIE) is disordered. Coiled-coil stretches lie at residues 311–345 (DEQAAIAARRLQELEDTNRKLQSMAQDISKLKMET), 460–616 (VNTL…RNLK), and 660–756 (DEVL…NDSA). An RING-type zinc finger spans residues 776-815 (CPSCKTRPKDCIMLKCYHLFCETCIKTMYDTRQRKCPKCN).

Belongs to the BRE1 family. As to quaternary structure, interacts with ubc-1. Interacts with mrg-1.

The protein resides in the nucleus. It carries out the reaction S-ubiquitinyl-[E2 ubiquitin-conjugating enzyme]-L-cysteine + [acceptor protein]-L-lysine = [E2 ubiquitin-conjugating enzyme]-L-cysteine + N(6)-ubiquitinyl-[acceptor protein]-L-lysine.. Its pathway is protein modification; protein ubiquitination. E3 ubiquitin-protein ligase that mediates monoubiquitination of 'Lys-117' of histone H2B. H2B 'Lys-117' ubiquitination gives a specific tag for epigenetic transcriptional activation and is also prerequisite for histone H3 'Lys-4' and 'Lys-79' methylation. Involved in regulating stem cell proliferative fate. The sequence is that of E3 ubiquitin-protein ligase bre-1 from Caenorhabditis briggsae.